The chain runs to 1134 residues: Envelopment polyprotein (1134 aa).

Positions 1–18 (MGIWKWLVMASLVWPVLT) are cleaved as a signal peptide. The Lumenal portion of the chain corresponds to 19–487 (LRNVYDMKIE…GFHGWATAAL (469 aa)). Cystine bridges form between C29/C151, C63/C157, C109/C128, C133/C138, C175/C185, C210/C247, C234/C351, and C380/C389. N-linked (GlcNAc...) asparagine; by host glycosylation occurs at N134. N-linked (GlcNAc...) asparagine; by host glycans are attached at residues N235 and N347. An N-linked (GlcNAc...) asparagine; by host glycan is attached at N399. Cystine bridges form between C405/C424 and C452/C475. The helical transmembrane segment at 488–508 (LVTFCFGWVLIPAVTFIILAI) threads the bilayer. Residues 509–627 (LKFIANIFHT…LNLFRYKSRC (119 aa)) lie on the Cytoplasmic side of the membrane. Residues 516 to 533 (FHTSNQENRLKSVLRKIK) form a binding to the ribonucleoprotein region. 2 CCHC-type zinc fingers span residues 545–565 (CDVC…GVSC) and 570–591 (CPYC…YKVC). Binding to the ribonucleoprotein regions lie at residues 588 to 605 (YKVC…KKTV), 592 to 603 (QVTHRFRDDLKK), and 611 to 625 (TPGC…RYKS). The ITAM domain occupies 611-634 (TPGCYRTLNLFRYKSRCYIFTMWI). Positions 615–618 (YRTL) match the YxxL motif. Residues 628–648 (YIFTMWIFLLVLESILWAASA) traverse the membrane as a helical segment. The Lumenal portion of the chain corresponds to 649-1104 (SETPLTPVWN…EWISGIFSGN (456 aa)). Disulfide bonds link C734/C769, C738/C776, C750/C884, C764/C895, C779/C903, C805/C814, and C822/C831. Residues 756 to 776 (YQYETSWGCNPSDCPGCGTGC) are fusion loop. N-linked (GlcNAc...) asparagine; by host glycosylation is present at N927. Disulfide bonds link C969/C999, C992/C1044, C1009/C1014, C1045/C1050, and C1084/C1088. The helical transmembrane segment at 1105–1125 (WIVLIVLCVFLLFSLVLLSIL) threads the bilayer. Residues 1121-1134 (LLSILCPVRKHKKS) are binding to the ribonucleoprotein. Residues 1126–1134 (CPVRKHKKS) lie on the Cytoplasmic side of the membrane.

This sequence belongs to the hantavirus envelope glycoprotein family. As to quaternary structure, homodimer. Homotetramer; forms heterotetrameric Gn-Gc spikes in the pre-fusion conformation. Interacts (via C-terminus) with the nucleoprotein. Interacts with host TUFM; this interaction contributes to the virus-induced degradation of mitochondria by autophagy, which leads to degradation of host MAVS and inhibition of type I interferon (IFN) responses. Interacts with host MAP1LC3B; this interaction contributes to the virus-induced degradation of mitochondria by autophagy, which leads to degradation of host MAVS and inhibition of type I interferon (IFN) responses. In terms of assembly, homodimer. Homotetramer; forms heterotetrameric Gn-Gc spikes in the pre-fusion conformation. Homotrimer; forms homotrimer in the post-fusion conformation at acidic pH. Interacts (via C-terminus) with the nucleoprotein. Envelope polyprotein precursor is quickly cleaved in vivo just after synthesis, presumably by host signal peptidase.

The protein resides in the virion membrane. Its subcellular location is the host cell surface. It localises to the host Golgi apparatus membrane. It is found in the host endoplasmic reticulum membrane. The protein localises to the host mitochondrion. Forms homotetramers with glycoprotein C at the surface of the virion. Attaches the virion to host cell receptors including integrin ITGAV/ITGB3. This attachment induces virion internalization predominantly through clathrin-dependent endocytosis. May also bind to host C1QBP for virus entry into the host cell. Mediates the assembly and budding of infectious virus particles through its interaction with the nucleocapsid protein and the viral genome. May dysregulate normal immune and endothelial cell responses through an ITAM motif. Translocates to mitochondria, binds to host TUFM and recruits MAP1LC3B. These interactions induce mitochondrial autophagy and therefore destruction of host MAVS leading to inhibition of type I interferon (IFN) responses. Concomitant breakdown of glycoprotein N is apparently prevented by the nucleoprotein that may inhibit Gn-stimulated autophagosome-lysosome fusion. Interacts with the viral genomic RNA. Functionally, forms homotetramers with glycoprotein N at the surface of the virion. Attaches the virion to host cell receptors including integrin ITGAV/ITGB3. This attachment induces virion internalization predominantly through clathrin-dependent endocytosis. May also bind to host C1QBP for virus entry into the host cell. Class II fusion protein that promotes fusion of viral membrane with host endosomal membrane after endocytosis of the virion. This Apodemus agrarius (Eurasian field mouse) protein is Envelopment polyprotein (GP).